Reading from the N-terminus, the 454-residue chain is Glutamyl-tRNA reductase (454 aa).

Substrate-binding positions include 49–52 (TCNR), serine 109, 114–116 (ETQ), and glutamine 120. Cysteine 50 serves as the catalytic Nucleophile. 189–194 (GAGKMG) is an NADP(+) binding site.

It belongs to the glutamyl-tRNA reductase family. As to quaternary structure, homodimer.

It carries out the reaction (S)-4-amino-5-oxopentanoate + tRNA(Glu) + NADP(+) = L-glutamyl-tRNA(Glu) + NADPH + H(+). It functions in the pathway porphyrin-containing compound metabolism; protoporphyrin-IX biosynthesis; 5-aminolevulinate from L-glutamyl-tRNA(Glu): step 1/2. Functionally, catalyzes the NADPH-dependent reduction of glutamyl-tRNA(Glu) to glutamate 1-semialdehyde (GSA). This chain is Glutamyl-tRNA reductase, found in Geobacillus kaustophilus (strain HTA426).